The following is a 349-amino-acid chain: Kelch domain-containing protein 9 (349 aa).

3 Kelch repeats span residues 39–89 (RFYL…PVDG), 91–137 (WLCV…SHTC), and 325–349 (QLYL…LDFI).

Interacts with CCNA1.

This chain is Kelch domain-containing protein 9 (KLHDC9), found in Homo sapiens (Human).